Here is a 231-residue protein sequence, read N- to C-terminus: Cytochrome c oxidase assembly factor 7A (231 aa).

Sel1-like repeat units follow at residues Pro34 to Glu66, Ser68 to Gly104, Ile108 to Phe145, Ala146 to His182, and Val183 to Lys218.

The protein belongs to the hcp beta-lactamase family.

Its subcellular location is the mitochondrion intermembrane space. Functionally, may be required for assembly of mitochondrial respiratory chain complexes. The protein is Cytochrome c oxidase assembly factor 7A (coa7-a) of Xenopus laevis (African clawed frog).